Consider the following 110-residue polypeptide: UPF0122 protein Sca_0859 (110 aa).

This sequence belongs to the UPF0122 family.

In terms of biological role, might take part in the signal recognition particle (SRP) pathway. This is inferred from the conservation of its genetic proximity to ftsY/ffh. May be a regulatory protein. The polypeptide is UPF0122 protein Sca_0859 (Staphylococcus carnosus (strain TM300)).